Here is a 375-residue protein sequence, read N- to C-terminus: 23S rRNA (uracil(747)-C(5))-methyltransferase RlmC (375 aa).

Residues C3, C11, C14, and C87 each contribute to the [4Fe-4S] cluster site. The S-adenosyl-L-methionine site is built by Q212, F241, E262, and N307. Catalysis depends on C334, which acts as the Nucleophile.

This sequence belongs to the class I-like SAM-binding methyltransferase superfamily. RNA M5U methyltransferase family. RlmC subfamily.

It carries out the reaction uridine(747) in 23S rRNA + S-adenosyl-L-methionine = 5-methyluridine(747) in 23S rRNA + S-adenosyl-L-homocysteine + H(+). Its function is as follows. Catalyzes the formation of 5-methyl-uridine at position 747 (m5U747) in 23S rRNA. The protein is 23S rRNA (uracil(747)-C(5))-methyltransferase RlmC of Escherichia coli O157:H7.